We begin with the raw amino-acid sequence, 399 residues long: MAKEKFSRNKPHVNIGTIGHVDHGKTTLTAAISAVLSRRGLAELKDYDNIDNAPEEKERGITIATSHIEYETENRHYAHVDCPGHADYVKNMITGAAQMDGAILVVSAADGPMPQTREHILLSRQVGVPYIVVFMNKADMVDDAELLELVEMEIRELLSEYDFPGDDTPIISGSALQALEEAKAGNDGEWSAKIMDLMAAVDSYIPTPVRATDKDFLMPIEDVFSISGRGTVVTGRIEKGIVKVGDTIEIVGIRDTQTTTVTGVEMFRKEMDQGEAGDNVGVLLRGTKKEDVERGMVLCKPKSITPHTKFEGEVYILTKEEGGRHTPFFNNYRPQFYVRTTDVTGSITLPEGTEMVMPGDNLKITVELINPVALEDGTRFAIREGGRTVGSGVVSKIIA.

The 200-residue stretch at 10 to 209 (KPHVNIGTIG…AVDSYIPTPV (200 aa)) folds into the tr-type G domain. A G1 region spans residues 19-26 (GHVDHGKT). 19-26 (GHVDHGKT) is a binding site for GTP. Mg(2+) is bound at residue threonine 26. A G2 region spans residues 60 to 64 (GITIA). Residues 81–84 (DCPG) form a G3 region. Residues 81-85 (DCPGH) and 136-139 (NKAD) each bind GTP. The segment at 136-139 (NKAD) is G4. The segment at 174 to 176 (SAL) is G5.

The protein belongs to the TRAFAC class translation factor GTPase superfamily. Classic translation factor GTPase family. EF-Tu/EF-1A subfamily. As to quaternary structure, monomer.

The protein resides in the cytoplasm. The enzyme catalyses GTP + H2O = GDP + phosphate + H(+). Its function is as follows. GTP hydrolase that promotes the GTP-dependent binding of aminoacyl-tRNA to the A-site of ribosomes during protein biosynthesis. This chain is Elongation factor Tu, found in Campylobacter fetus subsp. fetus (strain 82-40).